Consider the following 827-residue polypeptide: MTFCYPCRAFALLTRGFTSFMSGWPRIYYKLLNLPLSILVKSKSIPADPAPELGLDTSRPIMYVLPYNSKADLLTLRAQCLAHDLPDPLEPLEIDGTLLPRYVFIHGGPRVFTYYTPKEESIKLFHDYLDLHRSNPNLDVQMVPVSVMFGRAPGREKGEVNPPLRMLNGVQKFFAVLWLGRDSFVRFSPSVSLRRMADEHGTDKTIAQKLARVARMHFARQRLAAVGPRLPARQDLFNKLLASRAIAKAVEDEARSKKISHEKAQQNAIALMEEIAANFSYEMIRLTDRILGFTWNRLYQGINVHNAERVRQLAHDGHELVYVPCHRSHMDYLLLSYVLYHQGLVPPHIAAGINLNFWPAGPIFRRLGAFFIRRTFKGNKLYSTVFREYLGELFSRGYSVEYFVEGGRSRTGRLLDPKTGTLSMTIQAMLRGGTRPITLIPIYIGYEHVMEVGTYAKELRGATKEKESLPQMLRGLSKLRNLGQGYVNFGEPMPLMTYLNQHVPDWRESIDPIEAVRPAWLTPTVNNIAADLMVRINNAGAANAMNLCCTALLASRQRSLTREQLTEQLNCYLDLMRNVPYSTDSTVPSASASELIDHALQMNKFEVEKDTIGDIIILPREQAVLMTYYRNNIAHMLVLPSLMAAIVTQHRHISRDVLMEHVNVLYPMLKAELFLRWDRDELPDVIDALANEMQRQGLITLQDDELHINPAHSRPLQLLAAGARETLQRYAITFWLLSANPSINRGTLEKESRTVAQRLSVLHGINAPEFFDKAVFSSLVLTLRDEGYISDSGDAEPAETMKVYQLLAELITSDVRLTIESATQGEG.

Residues 325-330 (CHRSHM) carry the HXXXXD motif motif.

The protein belongs to the GPAT/DAPAT family.

Its subcellular location is the cell inner membrane. The enzyme catalyses sn-glycerol 3-phosphate + an acyl-CoA = a 1-acyl-sn-glycero-3-phosphate + CoA. The protein operates within phospholipid metabolism; CDP-diacylglycerol biosynthesis; CDP-diacylglycerol from sn-glycerol 3-phosphate: step 1/3. In Shigella sonnei (strain Ss046), this protein is Glycerol-3-phosphate acyltransferase.